Reading from the N-terminus, the 170-residue chain is Ureidoglycolate lyase (170 aa).

This sequence belongs to the ureidoglycolate lyase family. Homodimer. Ni(2+) serves as cofactor.

It catalyses the reaction (S)-ureidoglycolate = urea + glyoxylate. Its pathway is nitrogen metabolism; (S)-allantoin degradation. Functionally, catalyzes the catabolism of the allantoin degradation intermediate (S)-ureidoglycolate, generating urea and glyoxylate. Involved in the utilization of allantoin as nitrogen source. The protein is Ureidoglycolate lyase of Stutzerimonas stutzeri (strain A1501) (Pseudomonas stutzeri).